A 304-amino-acid polypeptide reads, in one-letter code: Lipid droplet-associated hydrolase (304 aa).

Ser119 (nucleophile) is an active-site residue. Catalysis depends on charge relay system residues Asp250 and His279.

This sequence belongs to the AB hydrolase superfamily. LDAH family.

It localises to the lipid droplet. The enzyme catalyses a cholesterol ester + H2O = cholesterol + a fatty acid + H(+). Functionally, probable serine lipid hydrolase associated with lipid droplets. Has low cholesterol esterase activity. Appears to lack triglyceride lipase activity. Involved in cholesterol and triglyceride homeostasis; stimulates cellular triglyceride accumulation and cellular cholesterol release. This Dictyostelium discoideum (Social amoeba) protein is Lipid droplet-associated hydrolase.